Here is a 934-residue protein sequence, read N- to C-terminus: LPS-assembly protein LptD (934 aa).

The first 33 residues, 1 to 33 (MALKSPAFRRKFPLLVTGGLLALQPFATSYVVA), serve as a signal peptide directing secretion. The interval 52–86 (KSPVNNLPPRPVHDGAALTSGTEAPSAEAESADKP) is disordered.

The protein belongs to the LptD family. In terms of assembly, component of the lipopolysaccharide transport and assembly complex. Interacts with LptE and LptA.

Its subcellular location is the cell outer membrane. In terms of biological role, together with LptE, is involved in the assembly of lipopolysaccharide (LPS) at the surface of the outer membrane. The protein is LPS-assembly protein LptD of Pseudomonas putida (strain W619).